Here is a 684-residue protein sequence, read N- to C-terminus: Zinc finger BED domain-containing protein RICESLEEPER 4 (684 aa).

The BED-type zinc-finger motif lies at 54 to 113 (KRKSAIWEHFTLVDVSDGCKRASCIHCNQSLAYSSGSKNSGTSHLTRHIAEWCRVLKDRQ). Residues Cys-77, Cys-80, His-101, and Cys-106 each contribute to the Zn(2+) site. Residues 595 to 680 (ELELYLEEAL…EALLCAKDWL (86 aa)) are HATC (Hobo-Ac-Tam3) domain.

In terms of assembly, homodimer.

It is found in the nucleus. Functionally, transposase-like protein that is essential for plant growth and development. May regulate global gene expression by recruiting other cellular factors. The protein is Zinc finger BED domain-containing protein RICESLEEPER 4 of Oryza sativa subsp. japonica (Rice).